A 159-amino-acid chain; its full sequence is Transcription elongation factor A protein-like 1 (159 aa).

The disordered stretch occupies residues 1 to 120 (MEKACKEPEE…PQFRGDIHGR (120 aa)). Over residues 17 to 34 (KADEERPSVEPSPEKSSP) the composition is skewed to basic and acidic residues. Acidic residues predominate over residues 37 to 54 (QSSEEVSSEEEFFPDELL). Basic and acidic residues-rich tracts occupy residues 64 to 80 (SEER…DLFE) and 95 to 119 (HKLE…DIHG).

This sequence belongs to the TFS-II family. TFA subfamily.

It is found in the nucleus. May be involved in transcriptional regulation. Modulates various viral and cellular promoters in a promoter context-dependent manner. Does not bind DNA directly. The sequence is that of Transcription elongation factor A protein-like 1 from Bos taurus (Bovine).